Consider the following 436-residue polypeptide: Ribulose bisphosphate carboxylase large chain (436 aa).

Residues asparagine 104 and threonine 154 each coordinate substrate. Lysine 156 functions as the Proton acceptor in the catalytic mechanism. Lysine 158 lines the substrate pocket. 3 residues coordinate Mg(2+): lysine 182, aspartate 184, and glutamate 185. Position 182 is an N6-carboxylysine (lysine 182). Histidine 275 serves as the catalytic Proton acceptor. Residues arginine 276, histidine 308, and serine 360 each contribute to the substrate site.

It belongs to the RuBisCO large chain family. Type I subfamily. In terms of assembly, heterohexadecamer of 8 large chains and 8 small chains. Mg(2+) is required as a cofactor.

It localises to the plastid. It is found in the chloroplast. The enzyme catalyses 2 (2R)-3-phosphoglycerate + 2 H(+) = D-ribulose 1,5-bisphosphate + CO2 + H2O. It carries out the reaction D-ribulose 1,5-bisphosphate + O2 = 2-phosphoglycolate + (2R)-3-phosphoglycerate + 2 H(+). RuBisCO catalyzes two reactions: the carboxylation of D-ribulose 1,5-bisphosphate, the primary event in carbon dioxide fixation, as well as the oxidative fragmentation of the pentose substrate in the photorespiration process. Both reactions occur simultaneously and in competition at the same active site. This is Ribulose bisphosphate carboxylase large chain from Euglena viridis (Cercaria viridis).